The primary structure comprises 473 residues: Cysteine protease ATG4A (473 aa).

Residues 1–33 (MTSLPGRGVSPSSSDPLCEGNAAPSSSSSGQDL) are disordered. Cys160 serves as the catalytic Nucleophile. Catalysis depends on residues Asp357 and His359.

Belongs to the peptidase C54 family. Interacts with ATG8.

The protein resides in the cytoplasm. It catalyses the reaction [protein]-C-terminal L-amino acid-glycyl-phosphatidylethanolamide + H2O = [protein]-C-terminal L-amino acid-glycine + a 1,2-diacyl-sn-glycero-3-phosphoethanolamine. In terms of biological role, cysteine protease that plays a key role in autophagy by mediating both proteolytic activation and delipidation of ATG8 family proteins. The protease activity is required for proteolytic activation of ATG8 family proteins: cleaves the C-terminal amino acid of ATG8 proteins to reveal a C-terminal glycine. Exposure of the glycine at the C-terminus is essential for ATG8 proteins conjugation to phosphatidylethanolamine (PE) and insertion to membranes, which is necessary for autophagy. In addition to the protease activity, also mediates delipidation of PE-conjugated ATG8 proteins. This chain is Cysteine protease ATG4A (ATG4A), found in Oryza sativa subsp. indica (Rice).